Here is a 343-residue protein sequence, read N- to C-terminus: Heat-inducible transcription repressor HrcA (343 aa).

This sequence belongs to the HrcA family.

Its function is as follows. Negative regulator of class I heat shock genes (grpE-dnaK-dnaJ and groELS operons). Prevents heat-shock induction of these operons. In Phytoplasma mali (strain AT), this protein is Heat-inducible transcription repressor HrcA.